Reading from the N-terminus, the 73-residue chain is N-terminal-borealin-like protein (73 aa).

This sequence belongs to the borealin family. In terms of assembly, component of the aurora kinase complex composed of at least BIR1, BNL1, IPL1 and SLI15.

Its subcellular location is the nucleus. The protein localises to the cytoplasm. It localises to the cytoskeleton. The protein resides in the spindle. Functionally, component of the aurora kinase complex, also called chromosomal passenger complex (CPC), essential for chromosome segregation and metaphase chromosome alignment. Mediates the SLI15-BIR1 interaction within the CPC. In Saccharomyces cerevisiae (strain ATCC 204508 / S288c) (Baker's yeast), this protein is N-terminal-borealin-like protein (NBL1).